The primary structure comprises 432 residues: D-amino acid dehydrogenase (432 aa).

3–17 (VVVLGSGVVGVTSAW) contributes to the FAD binding site.

This sequence belongs to the DadA oxidoreductase family. FAD serves as cofactor.

It carries out the reaction a D-alpha-amino acid + A + H2O = a 2-oxocarboxylate + AH2 + NH4(+). It participates in amino-acid degradation; D-alanine degradation; NH(3) and pyruvate from D-alanine: step 1/1. Oxidative deamination of D-amino acids. The chain is D-amino acid dehydrogenase from Enterobacter sp. (strain 638).